We begin with the raw amino-acid sequence, 125 residues long: Holo-[acyl-carrier-protein] synthase (125 aa).

2 residues coordinate Mg(2+): Asp-6 and Glu-55.

It belongs to the P-Pant transferase superfamily. AcpS family. Mg(2+) is required as a cofactor.

It localises to the cytoplasm. The catalysed reaction is apo-[ACP] + CoA = holo-[ACP] + adenosine 3',5'-bisphosphate + H(+). Transfers the 4'-phosphopantetheine moiety from coenzyme A to a Ser of acyl-carrier-protein. The chain is Holo-[acyl-carrier-protein] synthase from Chlorobium phaeovibrioides (strain DSM 265 / 1930) (Prosthecochloris vibrioformis (strain DSM 265)).